A 146-amino-acid polypeptide reads, in one-letter code: MKLHELKPAEGSRKVRNRVGRGIGSGNGKTAGKGHKGQNARSGGGVRLGFEGGQTPLFRRLPKRGFTNINRKEFAIVNLAALNRFEDGTEVTPELLLETGVISKLNDGVKVLASGAVEKKLTVKAHKFSSSAKEAIEAAGGTVEVI.

Residues 1–13 show a composition bias toward basic and acidic residues; that stretch reads MKLHELKPAEGSR. Positions 1-48 are disordered; it reads MKLHELKPAEGSRKVRNRVGRGIGSGNGKTAGKGHKGQNARSGGGVRL. Positions 21-31 are enriched in gly residues; that stretch reads RGIGSGNGKTA.

The protein belongs to the universal ribosomal protein uL15 family. In terms of assembly, part of the 50S ribosomal subunit.

Binds to the 23S rRNA. The protein is Large ribosomal subunit protein uL15 of Bacillus cytotoxicus (strain DSM 22905 / CIP 110041 / 391-98 / NVH 391-98).